The primary structure comprises 437 residues: Enolase (437 aa).

Gln162 contributes to the (2R)-2-phosphoglycerate binding site. Glu204 serves as the catalytic Proton donor. Asp251, Glu297, and Asp324 together coordinate Mg(2+). (2R)-2-phosphoglycerate contacts are provided by Lys349, Arg378, Ser379, and Lys400. Lys349 serves as the catalytic Proton acceptor.

It belongs to the enolase family. It depends on Mg(2+) as a cofactor.

Its subcellular location is the cytoplasm. The protein localises to the secreted. The protein resides in the cell surface. It catalyses the reaction (2R)-2-phosphoglycerate = phosphoenolpyruvate + H2O. The protein operates within carbohydrate degradation; glycolysis; pyruvate from D-glyceraldehyde 3-phosphate: step 4/5. In terms of biological role, catalyzes the reversible conversion of 2-phosphoglycerate (2-PG) into phosphoenolpyruvate (PEP). It is essential for the degradation of carbohydrates via glycolysis. This Chlorobaculum parvum (strain DSM 263 / NCIMB 8327) (Chlorobium vibrioforme subsp. thiosulfatophilum) protein is Enolase.